Consider the following 59-residue polypeptide: Large ribosomal subunit protein uL30 (59 aa).

Belongs to the universal ribosomal protein uL30 family. As to quaternary structure, part of the 50S ribosomal subunit.

The chain is Large ribosomal subunit protein uL30 from Herminiimonas arsenicoxydans.